A 505-amino-acid chain; its full sequence is Cyanidin 3-O-glucoside 7-O-glucosyltransferase (acyl-glucose) (505 aa).

A signal peptide spans 1–25 (MCPSFLVTLLLLQLSSLVVVLVVWA). A beta-D-glucoside-binding positions include Q52, H152, and 197 to 198 (NE). Catalysis depends on E198, which acts as the Proton donor. A disulfide bond links C217 and C225. N-linked (GlcNAc...) asparagine glycans are attached at residues N224, N229, and N324. A beta-D-glucoside-binding residues include Y341 and E403. E403 acts as the Nucleophile in catalysis. N-linked (GlcNAc...) asparagine glycans are attached at residues N411 and N437. A beta-D-glucoside contacts are provided by W447 and Y463. N494 carries N-linked (GlcNAc...) asparagine glycosylation.

This sequence belongs to the glycosyl hydrolase 1 family.

It localises to the vacuole. The catalysed reaction is 1-O-(4-hydroxy-3-methoxybenzoyl)-beta-D-glucose + cyanidin 3-O-beta-D-glucoside = cyanidin 3,7-di-O-beta-D-glucoside + vanillate. Its pathway is pigment biosynthesis; anthocyanin biosynthesis. Its function is as follows. Beta-glycosidase that catalyzes the transfer of glucose moiety to anthocyanidin 3-glucoside at the 7 position. Anthocyanins are ubiquitous colored pigments that are responsible for variations in petal color. The polypeptide is Cyanidin 3-O-glucoside 7-O-glucosyltransferase (acyl-glucose) (AA7GT) (Delphinium grandiflorum (Siberian larkspur)).